Here is a 258-residue protein sequence, read N- to C-terminus: Indole-3-glycerol phosphate synthase (258 aa).

The protein belongs to the TrpC family.

It carries out the reaction 1-(2-carboxyphenylamino)-1-deoxy-D-ribulose 5-phosphate + H(+) = (1S,2R)-1-C-(indol-3-yl)glycerol 3-phosphate + CO2 + H2O. Its pathway is amino-acid biosynthesis; L-tryptophan biosynthesis; L-tryptophan from chorismate: step 4/5. The sequence is that of Indole-3-glycerol phosphate synthase from Chlorobium phaeobacteroides (strain DSM 266 / SMG 266 / 2430).